Reading from the N-terminus, the 671-residue chain is DNA ligase (671 aa).

Residues 32 to 36 (DAEYD), 81 to 82 (SL), and Glu113 each bind NAD(+). Lys115 acts as the N6-AMP-lysine intermediate in catalysis. The NAD(+) site is built by Arg136, Glu173, Lys290, and Lys314. Zn(2+) contacts are provided by Cys408, Cys411, Cys426, and Cys432. Residues 593–671 (EIDSPFAGKT…ETEMLRLLGS (79 aa)) form the BRCT domain.

Belongs to the NAD-dependent DNA ligase family. LigA subfamily. Mg(2+) is required as a cofactor. Mn(2+) serves as cofactor.

It catalyses the reaction NAD(+) + (deoxyribonucleotide)n-3'-hydroxyl + 5'-phospho-(deoxyribonucleotide)m = (deoxyribonucleotide)n+m + AMP + beta-nicotinamide D-nucleotide.. Its function is as follows. DNA ligase that catalyzes the formation of phosphodiester linkages between 5'-phosphoryl and 3'-hydroxyl groups in double-stranded DNA using NAD as a coenzyme and as the energy source for the reaction. It is essential for DNA replication and repair of damaged DNA. The sequence is that of DNA ligase from Escherichia coli O6:H1 (strain CFT073 / ATCC 700928 / UPEC).